A 280-amino-acid chain; its full sequence is Mastin (280 aa).

The signal sequence occupies residues 1–15 (MLWLLVLTAPWLGGS). The propeptide occupies 16–30 (VPISPDPGLRHEQVG). The 245-residue stretch at 31–275 (IVGGCKVPAR…YVSWIHQHIP (245 aa)) folds into the Peptidase S1 domain. Cys62 and Cys78 are oxidised to a cystine. The active-site Charge relay system is His77. Asn106 and Asn117 each carry an N-linked (GlcNAc...) asparagine glycan. Asp127 (charge relay system) is an active-site residue. 3 disulfide bridges follow: Cys161–Cys234, Cys194–Cys215, and Cys224–Cys252. Catalysis depends on Ser228, which acts as the Charge relay system.

It belongs to the peptidase S1 family. Oligomer; disulfide-linked. In terms of processing, N-glycosylated. In terms of tissue distribution, mononuclear cells within skin, intestine, trachea and lung parenchyma, and polymorphonuclear leukocytes within capillaries and blood.

The protein localises to the cytoplasm. Its activity is regulated as follows. Inhibited by leupeptin and bis(5-amidino-2-benzimidazolyl)methane (BABIM). Functionally, trypsin-like serine protease. Has a preference for extended substrates with basic residues at the P1 position; Arg is preferred over Lys. Active towards calcitonin gene-related peptide and gelatin. Not active towards substance P, vasoactive intestinal peptide, type I collagen or azocasein. This chain is Mastin, found in Canis lupus familiaris (Dog).